The chain runs to 635 residues: Extracellular metalloproteinase MEP (635 aa).

A signal peptide spans 1–19; that stretch reads MRYSLSLALLGVAAVTVVA. Residues 20 to 242 constitute a propeptide that is removed on maturation; the sequence is HPHTPGRHGV…VHGVVDYVSH (223 aa). Position 428 (His428) interacts with Zn(2+). Residue Glu429 is part of the active site. His432 is a Zn(2+) binding site. Asn473 is a glycosylation site (N-linked (GlcNAc...) asparagine).

Belongs to the peptidase M36 family. It depends on Zn(2+) as a cofactor.

The protein localises to the secreted. Secreted metalloproteinase that allows assimilation of proteinaceous substrates. This chain is Extracellular metalloproteinase MEP (MEP), found in Pyricularia oryzae (strain 70-15 / ATCC MYA-4617 / FGSC 8958) (Rice blast fungus).